The chain runs to 311 residues: HPr kinase/phosphorylase (311 aa).

Residues H138 and K159 contribute to the active site. 153 to 160 (GKSGVGKS) serves as a coordination point for ATP. Residue S160 coordinates Mg(2+). The active-site Proton acceptor; for phosphorylation activity. Proton donor; for dephosphorylation activity is D177. An important for the catalytic mechanism of both phosphorylation and dephosphorylation region spans residues 201-210 (LEIRGLGIIN). Residue E202 coordinates Mg(2+). R243 is an active-site residue. Residues 264–269 (PVRPGR) form an important for the catalytic mechanism of dephosphorylation region.

This sequence belongs to the HPrK/P family. As to quaternary structure, homohexamer. Requires Mg(2+) as cofactor.

It catalyses the reaction [HPr protein]-L-serine + ATP = [HPr protein]-O-phospho-L-serine + ADP + H(+). It carries out the reaction [HPr protein]-O-phospho-L-serine + phosphate + H(+) = [HPr protein]-L-serine + diphosphate. Catalyzes the ATP- as well as the pyrophosphate-dependent phosphorylation of a specific serine residue in HPr, a phosphocarrier protein of the phosphoenolpyruvate-dependent sugar phosphotransferase system (PTS). HprK/P also catalyzes the pyrophosphate-producing, inorganic phosphate-dependent dephosphorylation (phosphorolysis) of seryl-phosphorylated HPr (P-Ser-HPr). The two antagonistic activities of HprK/P are regulated by several intracellular metabolites, which change their concentration in response to the absence or presence of rapidly metabolisable carbon sources (glucose, fructose, etc.) in the growth medium. Also phosphorylates/dephosphorylates the HPr-like catabolite repression protein crh on a specific serine residue. Therefore, by controlling the phosphorylation state of HPr and crh, HPrK/P is a sensor enzyme that plays a major role in the regulation of carbon metabolism and sugar transport: it mediates carbon catabolite repression (CCR), and regulates PTS-catalyzed carbohydrate uptake and inducer exclusion. The polypeptide is HPr kinase/phosphorylase (Geobacillus kaustophilus (strain HTA426)).